An 861-amino-acid polypeptide reads, in one-letter code: Leucine--tRNA ligase (861 aa).

The short motif at 42-52 (PYPSGRIHMGH) is the 'HIGH' region element. The 'KMSKS' region motif lies at 623 to 627 (KMSKS). ATP is bound at residue Lys-626.

This sequence belongs to the class-I aminoacyl-tRNA synthetase family.

The protein resides in the cytoplasm. The catalysed reaction is tRNA(Leu) + L-leucine + ATP = L-leucyl-tRNA(Leu) + AMP + diphosphate. The chain is Leucine--tRNA ligase from Caulobacter vibrioides (strain ATCC 19089 / CIP 103742 / CB 15) (Caulobacter crescentus).